A 185-amino-acid chain; its full sequence is Peptidyl-tRNA hydrolase (185 aa).

A tRNA-binding site is contributed by Tyr14. His19 functions as the Proton acceptor in the catalytic mechanism. The tRNA site is built by Tyr65, Asn67, and Asn113.

It belongs to the PTH family. Monomer.

It localises to the cytoplasm. The enzyme catalyses an N-acyl-L-alpha-aminoacyl-tRNA + H2O = an N-acyl-L-amino acid + a tRNA + H(+). Its function is as follows. Hydrolyzes ribosome-free peptidyl-tRNAs (with 1 or more amino acids incorporated), which drop off the ribosome during protein synthesis, or as a result of ribosome stalling. Functionally, catalyzes the release of premature peptidyl moieties from peptidyl-tRNA molecules trapped in stalled 50S ribosomal subunits, and thus maintains levels of free tRNAs and 50S ribosomes. The protein is Peptidyl-tRNA hydrolase of Rickettsia conorii (strain ATCC VR-613 / Malish 7).